The sequence spans 701 residues: Larval serum protein 2 (701 aa).

The N-terminal stretch at 1–21 (MKSFTVIALAAVALLATLGQA) is a signal peptide. The N-linked (GlcNAc...) asparagine glycan is linked to Asn204.

It belongs to the hemocyanin family. Homohexamer.

The protein localises to the secreted. The protein resides in the extracellular space. Larval storage protein (LSP) which may serve as a store of amino acids for synthesis of adult proteins. The chain is Larval serum protein 2 (Lsp2) from Drosophila melanogaster (Fruit fly).